The primary structure comprises 435 residues: Trigger factor (435 aa).

Residues 163–248 form the PPIase FKBP-type domain; that stretch reads GDFVTFDFKG…IKEIKVKELP (86 aa).

Belongs to the FKBP-type PPIase family. Tig subfamily.

Its subcellular location is the cytoplasm. The catalysed reaction is [protein]-peptidylproline (omega=180) = [protein]-peptidylproline (omega=0). Involved in protein export. Acts as a chaperone by maintaining the newly synthesized protein in an open conformation. Functions as a peptidyl-prolyl cis-trans isomerase. This Citrifermentans bemidjiense (strain ATCC BAA-1014 / DSM 16622 / JCM 12645 / Bem) (Geobacter bemidjiensis) protein is Trigger factor.